A 282-amino-acid chain; its full sequence is Protease HtpX homolog (282 aa).

The next 2 membrane-spanning stretches (helical) occupy residues 6–26 (TFIL…LIGG) and 28–48 (QGVI…YFFS). Residue His-130 participates in Zn(2+) binding. Glu-131 is an active-site residue. Residue His-134 participates in Zn(2+) binding. The next 2 helical transmembrane spans lie at 140–160 (ILIG…ANFA) and 177–197 (ILMI…QMAI). Glu-202 is a binding site for Zn(2+).

The protein belongs to the peptidase M48B family. The cofactor is Zn(2+).

The protein resides in the cell inner membrane. The chain is Protease HtpX homolog from Campylobacter hominis (strain ATCC BAA-381 / DSM 21671 / CCUG 45161 / LMG 19568 / NCTC 13146 / CH001A).